The chain runs to 584 residues: Transcription factor COE1 (584 aa).

Met1 carries the N-acetylmethionine modification. A compositionally biased stretch (polar residues) spans Met1 to Ser14. Residues Met1–Gly21 are disordered. A Glycyl lysine isopeptide (Lys-Gly) (interchain with G-Cter in SUMO1); alternate cross-link involves residue Lys16. Residue Lys16 forms a Glycyl lysine isopeptide (Lys-Gly) (interchain with G-Cter in SUMO2); alternate linkage. The segment at Arg63–Asn66 is interaction with DNA. The C5-type zinc-finger motif lies at Cys151–Cys170. Interaction with DNA stretches follow at residues Asn197 to Asn204 and Asn236 to Lys239. The IPT/TIG domain occupies Pro255–Thr338. Residues Gly450 to Asn473 are disordered.

It belongs to the COE family. In terms of assembly, homodimer. Interacts with ZNF423 and ZNF521, leading to prevent EBF1 to bind DNA and activate target genes. Interacts with CCR4-NOT component CNOT3. As to expression, expressed exclusively in olfactory receptor neurons and their precursors.

Its subcellular location is the nucleus. Key pioneer transcription factor of B-cell specification and commitment. Recognizes variations of the palindromic sequence 5'-ATTCCCNNGGGAATT-3'. Operates in a transcription factor network to activate B-cell-specific genes and repress genes associated with alternative cell fates. For instance, positively regulates many B-cell specific genes including BCR or CD40 while repressing genes that direct cells into alternative lineages, including GATA3 and TCF7 for the T-cell lineage. In addition to its role during lymphopoiesis, controls the thermogenic gene program in adipocytes during development and in response to environmental cold. The protein is Transcription factor COE1 (Ebf1) of Rattus norvegicus (Rat).